The sequence spans 931 residues: Ribosome-releasing factor 2, mitochondrial (931 aa).

The tr-type G domain maps to 63–379; it reads EKTRNIGIIA…AVNNLLPGPS (317 aa). Residues 72 to 79, 162 to 166, and 216 to 219 contribute to the GTP site; these read AHIDAGKT, DTPGH, and NKLD.

The protein belongs to the TRAFAC class translation factor GTPase superfamily. Classic translation factor GTPase family. EF-G/EF-2 subfamily.

Its subcellular location is the mitochondrion. Its function is as follows. Mitochondrial GTPase that mediates the disassembly of ribosomes from messenger RNA at the termination of mitochondrial protein biosynthesis. Not involved in the GTP-dependent ribosomal translocation step during translation elongation. This chain is Ribosome-releasing factor 2, mitochondrial (mef2), found in Talaromyces stipitatus (strain ATCC 10500 / CBS 375.48 / QM 6759 / NRRL 1006) (Penicillium stipitatum).